A 1456-amino-acid polypeptide reads, in one-letter code: Ig-like and fibronectin type-III domain-containing protein C27B7.7 (1456 aa).

The N-terminal stretch at 1 to 16 (MISLSLVLLLLFGVRC) is a signal peptide. Fibronectin type-III domains lie at 24–128 (NDDS…SINT) and 132–227 (IPKA…TNST). N-linked (GlcNAc...) asparagine glycans are attached at residues Asn64, Asn146, Asn164, Asn198, and Asn225. The Ig-like 1 domain maps to 236–322 (PDEEYTADPQ…DAGDSSKEVN (87 aa)). An intrachain disulfide couples Cys254 to Cys308. Residues 328–426 (PGSPPSEITL…VAMERDTQPI (99 aa)) form the Fibronectin type-III 3 domain. Residues Asn471, Asn497, and Asn517 are each glycosylated (N-linked (GlcNAc...) asparagine). 3 consecutive Fibronectin type-III domains span residues 531-631 (APTQ…TLNG), 636-736 (PPDN…TAYS), and 737-846 (EVPI…WFRT). Asn658, Asn691, and Asn692 each carry an N-linked (GlcNAc...) asparagine glycan. An Ig-like 2 domain is found at 841–948 (PRWFRTGHGK…GSSSASVEIR (108 aa)). Cys877 and Cys932 are disulfide-bonded. Asn893, Asn898, Asn969, Asn1091, Asn1120, Asn1133, Asn1151, Asn1207, Asn1268, Asn1277, Asn1298, Asn1350, Asn1357, and Asn1382 each carry an N-linked (GlcNAc...) asparagine glycan. The 96-residue stretch at 955–1050 (PPENIILTAY…SCISDVLYET (96 aa)) folds into the Fibronectin type-III 7 domain. Fibronectin type-III domains are found at residues 1148 to 1234 (APTN…TPNG), 1236 to 1343 (PKTA…ISFD), and 1347 to 1438 (VIDN…SSPS). Residues 1419–1456 (LGRESPPSEEIDLEFISSPSPTPIISGSRRKVIKEPPL) are disordered. A compositionally biased stretch (low complexity) spans 1434–1445 (ISSPSPTPIISG).

The protein localises to the secreted. This Caenorhabditis elegans protein is Ig-like and fibronectin type-III domain-containing protein C27B7.7.